The sequence spans 525 residues: MSEKLAARLEKLRRRHPQALADIYRGIEKEGLRVDSKGFIAQSDHPQALGSALTHPNITTDYSEALLELITPVTREVDELLTSLQEIHQFVHANLPAGESLWAGSMPSLLDGDESIRIAEYGESNLGKIKHVYRRGLAYRYGRIMQSIAGVHFNFSLGDDFWRAYQEVLAQSAPLQEFKSESYFSLIRNFRRWSWLLMYLFGASPALDRSFLNGRDHKLDQFGTDTLGLPHATSLRMSDLGYQNNAQSSLKICFNHLSTYVKTLYDATHTPFPRYEAIGLQRDGEYIQLNANLLQIENEYYNTIRPKRVTQSGEKPIQALKRRGIEYIEVRCLDLDPFSPIGVSESQIRFLDAFLLTCLLSDSAKIVDEECSIIEENFLTAVSRGRATDVELVRLLQNDYVQGGLQEWASRILEQVELCARELDAIKGGDSYAVAVRDARAKVNDPSLTPSARTYAAVSNGQSYVDWTLAMSQAHHQTLIANPLSPERMQHYVRAGEQSWADERALREADNLSFDAYLKQYLTYV.

Belongs to the glutamate--cysteine ligase type 1 family. Type 1 subfamily.

The catalysed reaction is L-cysteine + L-glutamate + ATP = gamma-L-glutamyl-L-cysteine + ADP + phosphate + H(+). It participates in sulfur metabolism; glutathione biosynthesis; glutathione from L-cysteine and L-glutamate: step 1/2. The polypeptide is Glutamate--cysteine ligase (Hahella chejuensis (strain KCTC 2396)).